Consider the following 430-residue polypeptide: Serine--tRNA ligase (430 aa).

237 to 239 (TAE) lines the L-serine pocket. Residue 268-270 (RSE) participates in ATP binding. Residue Glu-291 coordinates L-serine. 355–358 (EISS) contributes to the ATP binding site. Ser-391 lines the L-serine pocket.

The protein belongs to the class-II aminoacyl-tRNA synthetase family. Type-1 seryl-tRNA synthetase subfamily. Homodimer. The tRNA molecule binds across the dimer.

The protein resides in the cytoplasm. It catalyses the reaction tRNA(Ser) + L-serine + ATP = L-seryl-tRNA(Ser) + AMP + diphosphate + H(+). The enzyme catalyses tRNA(Sec) + L-serine + ATP = L-seryl-tRNA(Sec) + AMP + diphosphate + H(+). It functions in the pathway aminoacyl-tRNA biosynthesis; selenocysteinyl-tRNA(Sec) biosynthesis; L-seryl-tRNA(Sec) from L-serine and tRNA(Sec): step 1/1. In terms of biological role, catalyzes the attachment of serine to tRNA(Ser). Is also able to aminoacylate tRNA(Sec) with serine, to form the misacylated tRNA L-seryl-tRNA(Sec), which will be further converted into selenocysteinyl-tRNA(Sec). In Klebsiella pneumoniae (strain 342), this protein is Serine--tRNA ligase.